A 916-amino-acid polypeptide reads, in one-letter code: Neurofilament medium polypeptide (916 aa).

The span at 1–10 shows a compositional bias: polar residues; the sequence is MSYTLDSLGN. The segment at 1–51 is disordered; it reads MSYTLDSLGNPSAYRRVTETRSSFSRVSGSPSSGFRSQSWSRGSPSTVSSS. Ser-2 is subject to N-acetylserine. The head stretch occupies residues 2-104; it reads SYTLDSLGNP…KLSRSNEKEQ (103 aa). Over residues 21-44 the composition is skewed to low complexity; it reads RSSFSRVSGSPSSGFRSQSWSRGS. Phosphoserine is present on Ser-30. The residue at position 42 (Arg-42) is an Omega-N-methylarginine. A glycan (O-linked (GlcNAc) threonine) is linked at Thr-47. At Ser-99 the chain carries Phosphoserine. The IF rod domain occupies 101–412; it reads EKEQLQGLND…KLLEGEETRF (312 aa). The segment at 105 to 136 is coil 1A; that stretch reads LQGLNDRFAGYIEKVHYLEQQNKEIEAEIQAL. Positions 137–149 are linker 1; that stretch reads RQKQASHAQLGDA. The tract at residues 150–248 is coil 1B; the sequence is YDQEIRELRA…EEEVADLLAQ (99 aa). Ser-226 is modified (phosphoserine). Residues 249 to 265 are linker 12; the sequence is IQASHITVERKDYLKTD. Residues 266 to 287 form a coil 2A region; sequence ISTALKEIRSQLESHSDQNMHQ. Residues 288–291 are linker 2; it reads AEEW. The segment at 292–412 is coil 2B; it reads FKCRYAKLTE…KLLEGEETRF (121 aa). Tyr-320 carries the phosphotyrosine modification. Residues Ser-346 and Ser-418 each carry the phosphoserine modification. Residues 413-916 form a tail region; it reads STFAGSITGP…AIVKEVTQSD (504 aa). A glycan (O-linked (GlcNAc) threonine) is linked at Thr-431. 2 positions are modified to phosphoserine: Ser-467 and Ser-483. The tract at residues 485-851 is disordered; the sequence is KEEKKEAAEE…KKGGDKSEEK (367 aa). The segment covering 493 to 505 has biased composition (acidic residues); that stretch reads EEKEEEPEAEEEE. The residue at position 511 (Ser-511) is a Phosphoserine. A compositionally biased stretch (acidic residues) spans 521-541; sequence KEEEGEKEEEEGQEEEEEEDE. The segment covering 542–561 has biased composition (basic and acidic residues); it reads GAKSDQAEEGGSEKEGSSEK. 4 positions are modified to phosphoserine: Ser-545, Ser-553, Ser-558, and Ser-559. The span at 562–582 shows a compositional bias: acidic residues; it reads EEGEQEEGETEAEAEGEEAEA. Thr-571 carries the phosphothreonine modification. A compositionally biased stretch (basic and acidic residues) spans 583-614; the sequence is KEEKKVEEKSEEVATKEELVADAKVEKPEKAK. 6 tandem repeats follow at residues 614–626, 627–639, 640–652, 653–665, 666–678, and 679–691. The 6 X 13 AA approximate tandem repeats of K-S-P-V-[PS]-K-S-P-V-E-E-[KA]-[GAK] stretch occupies residues 614–691; sequence KSPVPKSPVE…VPKSPVEEAK (78 aa). Residues Ser-641 and Ser-646 each carry the phosphoserine modification. Phosphoserine occurs at positions 680 and 685. Basic and acidic residues-rich tracts occupy residues 686 to 701, 707 to 742, and 755 to 778; these read PVEEAKSKAEVGKGEQ, KEVKEAPKEEKVEKKEEKPKDVPEKKKAESPVKEEA, and VHLEKETKEEGKPLQQEKEKEKAG. A Phosphoserine modification is found at Ser-736. A phosphoserine mark is found at Ser-783, Ser-821, and Ser-837. The segment covering 788 to 828 has biased composition (basic and acidic residues); the sequence is SDKGAKGSRKEDIAVNGEVEGKEEVEQETKEKGSGREEEKG. Over residues 839-851 the composition is skewed to basic and acidic residues; sequence ADEKKGGDKSEEK.

It belongs to the intermediate filament family. Forms heterodimers with NEFL; which can further hetero-oligomerize (in vitro). Forms heterodimers with INA (in vitro). In terms of processing, there are a number of repeats of the tripeptide K-S-P, NFM is phosphorylated on a number of the serines in this motif. It is thought that phosphorylation of NFM results in the formation of interfilament cross bridges that are important in the maintenance of axonal caliber. Post-translationally, phosphorylation seems to play a major role in the functioning of the larger neurofilament polypeptides (NF-M and NF-H), the levels of phosphorylation being altered developmentally and coincidentally with a change in the neurofilament function. Phosphorylated in the head and rod regions by the PKC kinase PKN1, leading to the inhibition of polymerization.

The protein localises to the cytoplasm. The protein resides in the cytoskeleton. It is found in the cell projection. It localises to the axon. Its function is as follows. Neurofilaments usually contain three intermediate filament proteins: NEFL, NEFM, and NEFH which are involved in the maintenance of neuronal caliber. May additionally cooperate with the neuronal intermediate filament proteins PRPH and INA to form neuronal filamentous networks. This is Neurofilament medium polypeptide (NEFM) from Homo sapiens (Human).